We begin with the raw amino-acid sequence, 233 residues long: 2-C-methyl-D-erythritol 4-phosphate cytidylyltransferase (233 aa).

Belongs to the IspD/TarI cytidylyltransferase family. IspD subfamily.

It catalyses the reaction 2-C-methyl-D-erythritol 4-phosphate + CTP + H(+) = 4-CDP-2-C-methyl-D-erythritol + diphosphate. It participates in isoprenoid biosynthesis; isopentenyl diphosphate biosynthesis via DXP pathway; isopentenyl diphosphate from 1-deoxy-D-xylulose 5-phosphate: step 2/6. Catalyzes the formation of 4-diphosphocytidyl-2-C-methyl-D-erythritol from CTP and 2-C-methyl-D-erythritol 4-phosphate (MEP). This is 2-C-methyl-D-erythritol 4-phosphate cytidylyltransferase from Geotalea uraniireducens (strain Rf4) (Geobacter uraniireducens).